Here is a 397-residue protein sequence, read N- to C-terminus: Torsin-3A (397 aa).

A signal peptide spans 1-25 (MLRGPWRQLWLFFLLLLPGAPEPRG). A glycan (N-linked (GlcNAc...) asparagine) is linked at Asn122. Residue 167 to 174 (GWSGTGKN) coordinates ATP.

Belongs to the ClpA/ClpB family. Torsin subfamily. May not form homohexamers. In terms of processing, N-glycosylated. In terms of tissue distribution, ubiquitously expressed. Highest expression in stomach, salivary glands and lymph nodes. Isoform 2 is expressed in placenta.

The protein localises to the cytoplasm. It is found in the endoplasmic reticulum lumen. The protein is Torsin-3A (TOR3A) of Homo sapiens (Human).